The chain runs to 1072 residues: 5'-3' exoribonuclease 2 (1072 aa).

The stretch at 118–144 forms a coiled coil; that stretch reads RRFRAAREAMEKEEDKQKFVELLKKQN. A CCHC-type zinc finger spans residues 269–286; the sequence is RLCKICGQKGHDAMNCKG. Over residues 414-435 the composition is skewed to basic and acidic residues; that stretch reads KETEDRREAGFKRRKLADEARQ. 4 disordered regions span residues 414 to 459, 509 to 577, 865 to 911, and 943 to 1072; these read KETE…GFSF, QGTS…AEPT, ASRS…GGGG, and GGGY…RGYR. Over residues 518 to 543 the composition is skewed to low complexity; it reads AESTETPAETAAAAPATEEQAAPPAA. The span at 892 to 911 shows a compositional bias: gly residues; the sequence is GPGGGQQGGRGRGGYQGGGG. Over residues 955–967 the composition is skewed to pro residues; sequence GPPPGWQPPPPPG. 3 stretches are compositionally biased toward gly residues: residues 983–1000, 1025–1036, and 1056–1072; these read AYGG…GSSR, YGQGGSRGGYQG, and GYRG…RGYR.

Belongs to the 5'-3' exonuclease family. XRN2/RAT1 subfamily. Interacts with rai1; the interaction is direct, stabilizes exr-1 protein structure and may stimulate its exoribonuclease activity. The interaction also stimulates rai1 pyrophosphohydrolase activity, probably by recruiting it to mRNA substrates.

Its subcellular location is the nucleus. In terms of biological role, possesses 5'-&gt;3' exoribonuclease activity. Required for the processing of nuclear mRNA and rRNA precursors. May promote the termination of transcription by RNA polymerase II. Essential for vegetative cell growth and chromosome segregation. The protein is 5'-3' exoribonuclease 2 (exr-1) of Neurospora crassa (strain ATCC 24698 / 74-OR23-1A / CBS 708.71 / DSM 1257 / FGSC 987).